Consider the following 115-residue polypeptide: uncharacterized protein (115 aa).

The chain crosses the membrane as a helical span at residues 36 to 56 (SFFSLGLIACFCIFLIIVLSE).

It localises to the membrane. This is an uncharacterized protein from Saccharomyces cerevisiae (strain ATCC 204508 / S288c) (Baker's yeast).